A 185-amino-acid polypeptide reads, in one-letter code: MPVMPDQWIKSKALESRMIEPFVSSKISTGVISYGLSSYGYDARVSNKFKIFTNLAVSQVDPKNFDESMLIERTGDFCIIPPNSFALGCTIEYFRVPRGVIVICLGKSTYARCGIIVNVTPLEPEWEGHVTLEFSNTTPLPAKIYSNEGVCQMIFLKGSTNCDVSYKDAKGKYMGQAGITLPIVK.

DCTP is bound by residues 107-112, 131-133, Q152, Y166, and Q176; these read KSTYAR and TLE. E133 serves as the catalytic Proton donor/acceptor.

It belongs to the dCTP deaminase family. Homotrimer.

The catalysed reaction is dCTP + H2O + H(+) = dUTP + NH4(+). Its pathway is pyrimidine metabolism; dUMP biosynthesis; dUMP from dCTP (dUTP route): step 1/2. In terms of biological role, catalyzes the deamination of dCTP to dUTP. The sequence is that of dCTP deaminase from Neorickettsia sennetsu (strain ATCC VR-367 / Miyayama) (Ehrlichia sennetsu).